The following is a 444-amino-acid chain: Adenylosuccinate synthetase (444 aa).

GTP contacts are provided by residues 12–18 (GDEGKGK) and 40–42 (GHT). Aspartate 13 functions as the Proton acceptor in the catalytic mechanism. Positions 13 and 40 each coordinate Mg(2+). IMP-binding positions include 13 to 16 (DEGK), 38 to 41 (NAGH), threonine 128, arginine 142, glutamine 223, threonine 238, and arginine 302. Histidine 41 acts as the Proton donor in catalysis. A substrate-binding site is contributed by 298-304 (TTTGRRR). GTP contacts are provided by residues arginine 304, 330–332 (KLD), and 412–414 (SLG).

The protein belongs to the adenylosuccinate synthetase family. In terms of assembly, homodimer. Requires Mg(2+) as cofactor.

The protein localises to the cytoplasm. The catalysed reaction is IMP + L-aspartate + GTP = N(6)-(1,2-dicarboxyethyl)-AMP + GDP + phosphate + 2 H(+). The protein operates within purine metabolism; AMP biosynthesis via de novo pathway; AMP from IMP: step 1/2. In terms of biological role, plays an important role in the de novo pathway of purine nucleotide biosynthesis. Catalyzes the first committed step in the biosynthesis of AMP from IMP. In Synechococcus sp. (strain ATCC 27144 / PCC 6301 / SAUG 1402/1) (Anacystis nidulans), this protein is Adenylosuccinate synthetase.